We begin with the raw amino-acid sequence, 816 residues long: MANYGTKIDEKWQKFWDENEVYKFNPENSGKKLYTLEMFSYPSGAQLHAGHWFNYGPTDSWARLKRMQGYNVFQPMGFDAFGLPAENYAIKTGIHPQDSTLKNIETMEKQLKSMGAMFNWENEVVTCLPDYYKWTQWLFLKLYEKGLAYRKKAPVNWCPSCNTVLANEQVVDGVCERCSTEVTKKDLTQWFFKITEYGDELLDKLDGLDWPEKTKSMQKHWIGRSYGAEVTFKVKDSDLKFDVFTTRVDTLNGVTYVVLAPENKLVDELTIPEYKAAVEEYKEAAAKQSEIERQSVSKEKTGVFTGSYAINPINGKVVPIWISDYVLATYGTGCVMAVPAHDERDFAFATKFNLPIERVITDKENTNPDLPYCEYGVLVNSGKFDGLTTDEAKKKIVEELEKDELGAMKKNFRLRDWLVSRQRYWGAPIPVIYCDDCGIVPVPEKDLPVKLPYNVEFTPDGKSPLGKCEDFVNTTCPHCGKPAKREADTLDTFVCSSFYYLRYVDNKNDDAPFDSEKVNKMLPVDKYVGGPEHACMHLLYARFITKALRDMGYLNFDEPFLSLTHQGLILGPDGLKMSKSKGNTISPDDYIKEYGADVFRMYLMFGFGYTEGGAWSDDGIKSVGKFVDRIERILENCRNIINSNESTKDSIDSAEKELNFWKHNTIKGVTEDGDKMQFNTAIARLMELTNALNKYTQENIKNANFLKETIVDFIKLLAPFAPHFAEEQWSLLGNNSTIFNEKWPEFNPAALVKDEVEIAIQINGKIKAKIMVASNLDEEGIKAASLENETIKENTEGKTIVKVIVIKGRLVNIVVK.

The 'HIGH' region signature appears at 40 to 51; the sequence is SYPSGAQLHAGH. Positions 576 to 580 match the 'KMSKS' region motif; sequence KMSKS. K579 provides a ligand contact to ATP.

The protein belongs to the class-I aminoacyl-tRNA synthetase family.

It is found in the cytoplasm. It catalyses the reaction tRNA(Leu) + L-leucine + ATP = L-leucyl-tRNA(Leu) + AMP + diphosphate. The protein is Leucine--tRNA ligase of Clostridium beijerinckii (strain ATCC 51743 / NCIMB 8052) (Clostridium acetobutylicum).